Here is a 307-residue protein sequence, read N- to C-terminus: tRNA pseudouridine synthase B (307 aa).

Aspartate 47 (nucleophile) is an active-site residue.

Belongs to the pseudouridine synthase TruB family. Type 1 subfamily.

The catalysed reaction is uridine(55) in tRNA = pseudouridine(55) in tRNA. In terms of biological role, responsible for synthesis of pseudouridine from uracil-55 in the psi GC loop of transfer RNAs. This is tRNA pseudouridine synthase B from Chromohalobacter salexigens (strain ATCC BAA-138 / DSM 3043 / CIP 106854 / NCIMB 13768 / 1H11).